Consider the following 487-residue polypeptide: Aspartyl/glutamyl-tRNA(Asn/Gln) amidotransferase subunit B (487 aa).

The protein belongs to the GatB/GatE family. GatB subfamily. As to quaternary structure, heterotrimer of A, B and C subunits.

The enzyme catalyses L-glutamyl-tRNA(Gln) + L-glutamine + ATP + H2O = L-glutaminyl-tRNA(Gln) + L-glutamate + ADP + phosphate + H(+). The catalysed reaction is L-aspartyl-tRNA(Asn) + L-glutamine + ATP + H2O = L-asparaginyl-tRNA(Asn) + L-glutamate + ADP + phosphate + 2 H(+). Allows the formation of correctly charged Asn-tRNA(Asn) or Gln-tRNA(Gln) through the transamidation of misacylated Asp-tRNA(Asn) or Glu-tRNA(Gln) in organisms which lack either or both of asparaginyl-tRNA or glutaminyl-tRNA synthetases. The reaction takes place in the presence of glutamine and ATP through an activated phospho-Asp-tRNA(Asn) or phospho-Glu-tRNA(Gln). This is Aspartyl/glutamyl-tRNA(Asn/Gln) amidotransferase subunit B from Acidiphilium cryptum (strain JF-5).